Consider the following 328-residue polypeptide: Biotin synthase (328 aa).

The Radical SAM core domain maps to 41–260 (TAIETASLLS…VALARILMPA (220 aa)). The [4Fe-4S] cluster site is built by Cys56, Cys60, and Cys63. Positions 100, 131, 191, and 264 each coordinate [2Fe-2S] cluster.

This sequence belongs to the radical SAM superfamily. Biotin synthase family. In terms of assembly, homodimer. It depends on [4Fe-4S] cluster as a cofactor. [2Fe-2S] cluster serves as cofactor.

The enzyme catalyses (4R,5S)-dethiobiotin + (sulfur carrier)-SH + 2 reduced [2Fe-2S]-[ferredoxin] + 2 S-adenosyl-L-methionine = (sulfur carrier)-H + biotin + 2 5'-deoxyadenosine + 2 L-methionine + 2 oxidized [2Fe-2S]-[ferredoxin]. The protein operates within cofactor biosynthesis; biotin biosynthesis; biotin from 7,8-diaminononanoate: step 2/2. In terms of biological role, catalyzes the conversion of dethiobiotin (DTB) to biotin by the insertion of a sulfur atom into dethiobiotin via a radical-based mechanism. This is Biotin synthase from Cereibacter sphaeroides (strain ATCC 17023 / DSM 158 / JCM 6121 / CCUG 31486 / LMG 2827 / NBRC 12203 / NCIMB 8253 / ATH 2.4.1.) (Rhodobacter sphaeroides).